The sequence spans 38 residues: Photosystem I reaction center subunit IX (38 aa).

Residues Phe-4 to Ile-24 form a helical membrane-spanning segment.

Belongs to the PsaJ family.

It localises to the cellular thylakoid membrane. Its function is as follows. May help in the organization of the PsaE and PsaF subunits. The polypeptide is Photosystem I reaction center subunit IX (Synechococcus sp. (strain CC9605)).